The chain runs to 202 residues: Dephospho-CoA kinase (202 aa).

One can recognise a DPCK domain in the interval 3–202 (IFGLTGGIGS…ISHRSKYLSC (200 aa)). Residue 11 to 16 (GSGKSL) coordinates ATP.

This sequence belongs to the CoaE family.

Its subcellular location is the cytoplasm. The enzyme catalyses 3'-dephospho-CoA + ATP = ADP + CoA + H(+). Its pathway is cofactor biosynthesis; coenzyme A biosynthesis; CoA from (R)-pantothenate: step 5/5. In terms of biological role, catalyzes the phosphorylation of the 3'-hydroxyl group of dephosphocoenzyme A to form coenzyme A. The polypeptide is Dephospho-CoA kinase (Ehrlichia chaffeensis (strain ATCC CRL-10679 / Arkansas)).